The sequence spans 204 residues: LexA repressor (204 aa).

The H-T-H motif DNA-binding region spans 27-47; it reads VREIGEAVGLASSSTVHGHLA. Residues S126 and K164 each act as for autocatalytic cleavage activity in the active site.

Belongs to the peptidase S24 family. As to quaternary structure, homodimer.

The catalysed reaction is Hydrolysis of Ala-|-Gly bond in repressor LexA.. Functionally, represses a number of genes involved in the response to DNA damage (SOS response), including recA and lexA. In the presence of single-stranded DNA, RecA interacts with LexA causing an autocatalytic cleavage which disrupts the DNA-binding part of LexA, leading to derepression of the SOS regulon and eventually DNA repair. The sequence is that of LexA repressor from Listeria welshimeri serovar 6b (strain ATCC 35897 / DSM 20650 / CCUG 15529 / CIP 8149 / NCTC 11857 / SLCC 5334 / V8).